A 281-amino-acid chain; its full sequence is Protease HtpX homolog (281 aa).

Helical transmembrane passes span 6–26 (VWLLMAALSAILVLIGGAIGG) and 28–48 (SGALLFFLISLGMNLFSYYYS). Histidine 130 contributes to the Zn(2+) binding site. Glutamate 131 is a catalytic residue. Residue histidine 134 coordinates Zn(2+). The next 2 membrane-spanning stretches (helical) occupy residues 140-160 (VLIGTIAAAFAGAITMISNIV) and 181-201 (IASLLLALIAPVAAMIIQLAI). Glutamate 206 provides a ligand contact to Zn(2+).

Belongs to the peptidase M48B family. Requires Zn(2+) as cofactor.

It is found in the cell membrane. In Pelotomaculum thermopropionicum (strain DSM 13744 / JCM 10971 / SI), this protein is Protease HtpX homolog.